Here is a 401-residue protein sequence, read N- to C-terminus: tRNA-specific 2-thiouridylase MnmA (401 aa).

ATP contacts are provided by residues 13–20 (GLSGGVDS) and Met-39. The tract at residues 99-101 (NPD) is interaction with target base in tRNA. The active-site Nucleophile is Cys-104. Cys-104 and Cys-202 are joined by a disulfide. Residue Gly-128 participates in ATP binding. The tract at residues 152–154 (KDQ) is interaction with tRNA. Cys-202 functions as the Cysteine persulfide intermediate in the catalytic mechanism. Positions 329–330 (RY) are interaction with tRNA.

This sequence belongs to the MnmA/TRMU family.

It is found in the cytoplasm. The enzyme catalyses S-sulfanyl-L-cysteinyl-[protein] + uridine(34) in tRNA + AH2 + ATP = 2-thiouridine(34) in tRNA + L-cysteinyl-[protein] + A + AMP + diphosphate + H(+). Its function is as follows. Catalyzes the 2-thiolation of uridine at the wobble position (U34) of tRNA, leading to the formation of s(2)U34. The polypeptide is tRNA-specific 2-thiouridylase MnmA (Polaromonas sp. (strain JS666 / ATCC BAA-500)).